The chain runs to 526 residues: Bifunctional purine biosynthesis protein PurH (526 aa).

Positions 1–148 constitute an MGS-like domain; sequence MSLNNIIKNA…KNYKDVIVIV (148 aa).

The protein belongs to the PurH family.

It catalyses the reaction (6R)-10-formyltetrahydrofolate + 5-amino-1-(5-phospho-beta-D-ribosyl)imidazole-4-carboxamide = 5-formamido-1-(5-phospho-D-ribosyl)imidazole-4-carboxamide + (6S)-5,6,7,8-tetrahydrofolate. The enzyme catalyses IMP + H2O = 5-formamido-1-(5-phospho-D-ribosyl)imidazole-4-carboxamide. Its pathway is purine metabolism; IMP biosynthesis via de novo pathway; 5-formamido-1-(5-phospho-D-ribosyl)imidazole-4-carboxamide from 5-amino-1-(5-phospho-D-ribosyl)imidazole-4-carboxamide (10-formyl THF route): step 1/1. It functions in the pathway purine metabolism; IMP biosynthesis via de novo pathway; IMP from 5-formamido-1-(5-phospho-D-ribosyl)imidazole-4-carboxamide: step 1/1. The chain is Bifunctional purine biosynthesis protein PurH from Buchnera aphidicola subsp. Schizaphis graminum (strain Sg).